We begin with the raw amino-acid sequence, 291 residues long: Pyridoxal kinase PdxY (291 aa).

Substrate is bound by residues serine 9 and 44-45; that span reads TQ. ATP contacts are provided by residues aspartate 112, valine 144, glutamate 149, lysine 182, and 207 to 210; that span reads RPHL. Position 221 (aspartate 221) interacts with substrate.

The protein belongs to the pyridoxine kinase family. PdxY subfamily. Homodimer. It depends on Mg(2+) as a cofactor.

It carries out the reaction pyridoxal + ATP = pyridoxal 5'-phosphate + ADP + H(+). It functions in the pathway cofactor metabolism; pyridoxal 5'-phosphate salvage; pyridoxal 5'-phosphate from pyridoxal: step 1/1. In terms of biological role, pyridoxal kinase involved in the salvage pathway of pyridoxal 5'-phosphate (PLP). Catalyzes the phosphorylation of pyridoxal to PLP. In Photobacterium profundum (strain SS9), this protein is Pyridoxal kinase PdxY.